Consider the following 225-residue polypeptide: uncharacterized protein (225 aa).

Residues 1-22 (MLQHYSVSWKKGLAALCLLAVA) form the signal peptide. In terms of domain architecture, 4Fe-4S ferredoxin-type spans 161–190 (GNLTAAEEKKTGCLVCLDSCPVGIVSNATY).

This is an uncharacterized protein from Escherichia coli (strain K12).